The sequence spans 457 residues: Cysteine--tRNA ligase (457 aa).

Cys28 contributes to the Zn(2+) binding site. The 'HIGH' region signature appears at 30-40 (MTVYDLCHIGH). Zn(2+)-binding residues include Cys209, His234, and Glu238. Residues 266-270 (KMSKS) carry the 'KMSKS' region motif. Lys269 provides a ligand contact to ATP.

The protein belongs to the class-I aminoacyl-tRNA synthetase family. In terms of assembly, monomer. The cofactor is Zn(2+).

The protein localises to the cytoplasm. The catalysed reaction is tRNA(Cys) + L-cysteine + ATP = L-cysteinyl-tRNA(Cys) + AMP + diphosphate. The polypeptide is Cysteine--tRNA ligase (Chromobacterium violaceum (strain ATCC 12472 / DSM 30191 / JCM 1249 / CCUG 213 / NBRC 12614 / NCIMB 9131 / NCTC 9757 / MK)).